The following is a 548-amino-acid chain: Cytochrome P450 monooxygenase hepE (548 aa).

Cysteine 485 contributes to the heme binding site.

Belongs to the cytochrome P450 family. The cofactor is heme.

Its pathway is secondary metabolite biosynthesis. In terms of biological role, cytochrome P450 monooxygenase; part of the gene cluster that mediates the biosynthesis of heptelidic acid (HA), a sesquiterpene lactone that acts as an inhibitor of glyceraldehyde-3-phosphatedehydrogenase (GAPDH) and a growth inhibitor of the salt-tolerant lactic acid bacteria in soy sauce brewing. This is Cytochrome P450 monooxygenase hepE from Aspergillus oryzae (strain ATCC 42149 / RIB 40) (Yellow koji mold).